We begin with the raw amino-acid sequence, 48 residues long: Large ribosomal subunit protein bL33B (48 aa).

This sequence belongs to the bacterial ribosomal protein bL33 family.

The sequence is that of Large ribosomal subunit protein bL33B (rpmG2) from Mycoplasma genitalium (strain ATCC 33530 / DSM 19775 / NCTC 10195 / G37) (Mycoplasmoides genitalium).